A 256-amino-acid polypeptide reads, in one-letter code: MAHRPPSPALASVLLALLLSGAARAAEIVGGHEAQPHSRPYMASLQMRGNPGSHFCGGTLIHPSFVLTAAHCLRDIPQRLVNVVLGAHNVRTQEPTQQHFSVAQVFLNNYDAENKLNDVLLIQLSSPANLSASVATVQLPQQDQPVPHGTQCLAMGWGRVGAHDPPAQVLQELNVTVVTFFCRPHNICTFVPRRKAGICFGDSGGPLICDGIIQGIDSFVIWGCATRLFPDFFTRVALYVDWIRSTLRRVEAKGRP.

A signal peptide spans 1–25 (MAHRPPSPALASVLLALLLSGAARA). Residues 26-27 (AE) constitute a propeptide that is removed on maturation. The 221-residue stretch at 28–248 (IVGGHEAQPH…YVDWIRSTLR (221 aa)) folds into the Peptidase S1 domain. Cys-56 and Cys-72 are disulfide-bonded. Residues His-71 and Asp-118 each act as charge relay system in the active site. N-linked (GlcNAc...) asparagine glycans are attached at residues Asn-129 and Asn-174. Cystine bridges form between Cys-152-Cys-209, Cys-182-Cys-188, and Cys-199-Cys-224. Residue Ser-203 is the Charge relay system of the active site. The propeptide occupies 249-256 (RVEAKGRP).

The protein belongs to the peptidase S1 family. Elastase subfamily. As to quaternary structure, may form dimers. Interacts with CD177; the interaction tethers PRTN3 to the cell surface; the interaction is direct. Interacts with SERPINB1. Interacts with ADGRG3. In terms of tissue distribution, expressed in polymorphonuclear leukocytes (at protein level). Expressed in neutrophils (at protein level). Expressed in differentiating neutrophils.

Its subcellular location is the cytoplasmic granule. It is found in the secreted. It localises to the cell membrane. The protein localises to the membrane raft. It catalyses the reaction Hydrolysis of proteins, including elastin, by preferential cleavage: -Ala-|-Xaa- &gt; -Val-|-Xaa-.. Inhibited by phenylmethanesulfonyl fluoride (PMSF) and diisopropyl fluorophosphate (DFP). Functionally, serine protease that degrades elastin, fibronectin, laminin, vitronectin, and collagen types I, III, and IV (in vitro). By cleaving and activating receptor F2RL1/PAR-2, enhances endothelial cell barrier function and thus vascular integrity during neutrophil transendothelial migration. Plays a role in neutrophil transendothelial migration, probably when associated with CD177. Triggers inflammatory processes in neutrophils by interacting with ADGRG3 upstream of F2RL1/PAR2 activation. The sequence is that of Myeloblastin (PRTN3) from Homo sapiens (Human).